The primary structure comprises 333 residues: Probable cytosolic iron-sulfur protein assembly protein ciao1-B (333 aa).

WD repeat units lie at residues 14–53 (HPDSRCWYVAWNPKGTLLASCGGDRTIRIWGREGDSWECK), 59–98 (GHQRTVRKVAWSPCGNYLASASFDATTCIWKKKNDDFECL), 103–142 (GHENEVKCVAWAPSGNLLATCSRDKSVWIWEVDEENEYEC), 148–187 (SHTQDVKHVVWHPTQELLASCSYDNNVCVYKEEDDDWECR), 192–231 (GHTSTVWGLTFDPSGQRLASCSDDCTVKIWKECQPEGGQE), 246–285 (FHGRTVYDIAWCPLTGALATACGDDGVRVFKEDETADPDQ), and 297–333 (AHTQDVNCIAWHPKEAGLLVSCSDNGEIAVWNYQSGV).

It belongs to the WD repeat CIA1 family. Component of the CIA complex.

Functionally, key component of the cytosolic iron-sulfur protein assembly (CIA) complex, a multiprotein complex that mediates the incorporation of iron-sulfur cluster into extramitochondrial Fe/S proteins. The sequence is that of Probable cytosolic iron-sulfur protein assembly protein ciao1-B (ciao1b) from Salmo salar (Atlantic salmon).